We begin with the raw amino-acid sequence, 552 residues long: Protein FAM234A (552 aa).

Residues 1–48 (MTDGKDLEAEIHPLKSENRKVPENAGALAGKEPRGTPAPQTRLSHCRT) lie on the Cytoplasmic side of the membrane. A helical; Signal-anchor for type II membrane protein transmembrane segment spans residues 49-69 (AAFFLSLFACLLVVFVVSFII). Over 70–552 (PCPDRPALQG…LSRLRYRSEA (483 aa)) the chain is Extracellular. 3 N-linked (GlcNAc...) asparagine glycosylation sites follow: N115, N238, and N473.

This sequence belongs to the FAM234 family.

It localises to the membrane. In Bos taurus (Bovine), this protein is Protein FAM234A (FAM234A).